The primary structure comprises 349 residues: Bifunctional protein FolKE (349 aa).

Residues 1-226 (MQTTYLSMGS…LFEIDSSKTD (226 aa)) are 2-amino-4-hydroxy-6-hydroxymethyldihydropteridine pyrophosphokinase. The GTP cyclohydrolase 1 stretch occupies residues 226–349 (DSIVLIKDIP…KRMEFLESLL (124 aa)).

In the N-terminal section; belongs to the HPPK family. It in the C-terminal section; belongs to the GTP cyclohydrolase I family. As to quaternary structure, homomer.

It carries out the reaction 6-hydroxymethyl-7,8-dihydropterin + ATP = (7,8-dihydropterin-6-yl)methyl diphosphate + AMP + H(+). The catalysed reaction is GTP + H2O = 7,8-dihydroneopterin 3'-triphosphate + formate + H(+). The protein operates within cofactor biosynthesis; 7,8-dihydroneopterin triphosphate biosynthesis; 7,8-dihydroneopterin triphosphate from GTP: step 1/1. It functions in the pathway cofactor biosynthesis; tetrahydrofolate biosynthesis; 2-amino-4-hydroxy-6-hydroxymethyl-7,8-dihydropteridine diphosphate from 7,8-dihydroneopterin triphosphate: step 4/4. The protein is Bifunctional protein FolKE (folKE) of Lactococcus lactis subsp. lactis (strain IL1403) (Streptococcus lactis).